The following is a 199-amino-acid chain: Recombination protein RecR (199 aa).

Residues Cys56 to Cys71 form a C4-type zinc finger. Positions Thr79 to Pro174 constitute a Toprim domain.

It belongs to the RecR family.

In terms of biological role, may play a role in DNA repair. It seems to be involved in an RecBC-independent recombinational process of DNA repair. It may act with RecF and RecO. The protein is Recombination protein RecR of Legionella pneumophila subsp. pneumophila (strain Philadelphia 1 / ATCC 33152 / DSM 7513).